The primary structure comprises 197 residues: Nucleoside triphosphate pyrophosphatase (197 aa).

Catalysis depends on aspartate 71, which acts as the Proton acceptor.

It belongs to the Maf family. Requires a divalent metal cation as cofactor.

It is found in the cytoplasm. It catalyses the reaction a ribonucleoside 5'-triphosphate + H2O = a ribonucleoside 5'-phosphate + diphosphate + H(+). It carries out the reaction a 2'-deoxyribonucleoside 5'-triphosphate + H2O = a 2'-deoxyribonucleoside 5'-phosphate + diphosphate + H(+). Nucleoside triphosphate pyrophosphatase. May have a dual role in cell division arrest and in preventing the incorporation of modified nucleotides into cellular nucleic acids. In Nostoc punctiforme (strain ATCC 29133 / PCC 73102), this protein is Nucleoside triphosphate pyrophosphatase.